A 376-amino-acid polypeptide reads, in one-letter code: Phosphoserine aminotransferase (376 aa).

R54 is a binding site for L-glutamate. Residues 88-89 (AT), W115, T165, D186, and Q209 each bind pyridoxal 5'-phosphate. Residue K210 is modified to N6-(pyridoxal phosphate)lysine. Residue 251–252 (NT) participates in pyridoxal 5'-phosphate binding.

It belongs to the class-V pyridoxal-phosphate-dependent aminotransferase family. SerC subfamily. Homodimer. Pyridoxal 5'-phosphate is required as a cofactor.

The protein resides in the cytoplasm. It catalyses the reaction O-phospho-L-serine + 2-oxoglutarate = 3-phosphooxypyruvate + L-glutamate. The catalysed reaction is 4-(phosphooxy)-L-threonine + 2-oxoglutarate = (R)-3-hydroxy-2-oxo-4-phosphooxybutanoate + L-glutamate. It functions in the pathway amino-acid biosynthesis; L-serine biosynthesis; L-serine from 3-phospho-D-glycerate: step 2/3. It participates in cofactor biosynthesis; pyridoxine 5'-phosphate biosynthesis; pyridoxine 5'-phosphate from D-erythrose 4-phosphate: step 3/5. Its function is as follows. Catalyzes the reversible conversion of 3-phosphohydroxypyruvate to phosphoserine and of 3-hydroxy-2-oxo-4-phosphonooxybutanoate to phosphohydroxythreonine. In Rhodopirellula baltica (strain DSM 10527 / NCIMB 13988 / SH1), this protein is Phosphoserine aminotransferase.